A 370-amino-acid chain; its full sequence is MTCQAFASSDNFVPLNSDSSPSLPLIMHHSAAECLPVSNHATSVVSTVPSVLSLIQTPKCSHLHFAMMTSGNVSAGLHYSVPSCHYGNQTSTYGVMTGIKPATPEMLSASLSQSRILQTCSMPHPNVVNGVSTLQSKSFSFSCSLTPCLYKFPEHALSASSCALGHSFTPMHQTLLSDDPTAADFKQEFRRKSKSVEEPVDMDSPEIRELEKFANEFKLRRIKLGYTQTNVGEALAAVHGSEFSQTTICRFENSQLSFKNACKLKSILSKWLEEAEQVGALYNEKVGVNERKRKRRTTISIAAKEALERHFGEQSKPSSQEIMRMAEGLNLEKEVVRVWFCNRRQREKRVKTSLHQNAFSSIIKEHHECR.

A 9aaTAD motif is present at residues 5-13; the sequence is AFASSDNFV. Residues 202–276 enclose the POU-specific domain; sequence MDSPEIRELE…ILSKWLEEAE (75 aa). The homeobox DNA-binding region spans 292 to 351; it reads KRKRRTTISIAAKEALERHFGEQSKPSSQEIMRMAEGLNLEKEVVRVWFCNRRQREKRVK.

The protein belongs to the POU transcription factor family. Class-1 subfamily. Pituitary gland.

The protein resides in the nucleus. Its function is as follows. Transcription factor that activates growth hormone and prolactin genes. Specifically binds to the consensus sequence 5'-TAAAT-3'. In Meleagris gallopavo (Wild turkey), this protein is Pituitary-specific positive transcription factor 1 (POU1F1).